The following is a 127-amino-acid chain: Protein SPIRAL1-like 4 (127 aa).

A disordered region spans residues 1–127; that stretch reads MGKARGVNSG…FGSGPCGSDK (127 aa). A compositionally biased stretch (low complexity) spans 39-48; sequence TTTTTTTTTT. Ser-80 is subject to Phosphoserine. A compositionally biased stretch (polar residues) spans 80–94; the sequence is SPNNYYRSDGQNCGN.

It belongs to the SPIRAL1 family. In terms of tissue distribution, ubiquitous.

Functionally, acts redundantly with SPR1 in maintaining the cortical microtubules organization essential for anisotropic cell growth. The sequence is that of Protein SPIRAL1-like 4 (SP1L4) from Arabidopsis thaliana (Mouse-ear cress).